A 235-amino-acid chain; its full sequence is Voltage-gated hydrogen channel 1 (235 aa).

Topologically, residues 1-65 (MSRYLKHFTA…SLRKLYSTER (65 aa)) are cytoplasmic. A helical transmembrane segment spans residues 66–86 (FQIVVVCLVVLDAIFVLCELL). Residues 87–103 (IDLSIIEADHHRIAPQV) lie on the Extracellular side of the membrane. Residues 104 to 126 (FHYLSLALLTFFMVELAGKIFAY) form a helical membrane-spanning segment. The Cytoplasmic portion of the chain corresponds to 127-134 (RLEFLHHK). Residues 135–155 (FEVFDGIVVVVSFILDIIYIS) form a helical membrane-spanning segment. At 156–162 (KEDAFDA) the chain is on the extracellular side. The helical transmembrane segment at 163-183 (MGLLILLRLWRVARIINGILV) threads the bilayer. Over 184 to 235 (SVQNRANHRVEKLKEINESLVHQVNELKEQNTKMDQENVRLRALLKDHSIDF) the chain is Cytoplasmic. Positions 187-231 (NRANHRVEKLKEINESLVHQVNELKEQNTKMDQENVRLRALLKDH) form a coiled coil.

Belongs to the hydrogen channel family. Homodimer.

The protein resides in the membrane. Its subcellular location is the cell membrane. Mediates the voltage-dependent proton permeability of excitable membranes. Forms a proton-selective channel through which protons may pass in accordance with their electrochemical gradient. The protein is Voltage-gated hydrogen channel 1 (hvcn1) of Danio rerio (Zebrafish).